The sequence spans 410 residues: Aspartate aminotransferase (410 aa).

3 residues coordinate L-aspartate: Gly47, Trp135, and Asn185. Lys249 carries the N6-(pyridoxal phosphate)lysine modification. Arg385 is an L-aspartate binding site.

The protein belongs to the class-I pyridoxal-phosphate-dependent aminotransferase family. In terms of assembly, homodimer. Pyridoxal 5'-phosphate serves as cofactor.

It localises to the cytoplasm. The enzyme catalyses L-aspartate + 2-oxoglutarate = oxaloacetate + L-glutamate. It carries out the reaction L-2-aminoadipate + 2-oxoglutarate = 2-oxoadipate + L-glutamate. In terms of biological role, catalyzes the reversible conversion of aspartate and 2-oxoglutarate to glutamate and oxaloacetate. Genetic evidence shows that this protein is involved in L-lysine catabolism. It may have 2-aminoadipate:2-oxoglutarate aminotransferase activity. This is Aspartate aminotransferase (aatB) from Rhizobium meliloti (strain 1021) (Ensifer meliloti).